The sequence spans 439 residues: Glutamate--tRNA ligase 2 (439 aa).

The 'HIGH' region signature appears at P6–N16. The short motif at K232–R236 is the 'KMSKS' region element. ATP is bound at residue K235.

It belongs to the class-I aminoacyl-tRNA synthetase family. Glutamate--tRNA ligase type 1 subfamily. Monomer.

The protein resides in the cytoplasm. The enzyme catalyses tRNA(Glu) + L-glutamate + ATP = L-glutamyl-tRNA(Glu) + AMP + diphosphate. Its function is as follows. Catalyzes the attachment of glutamate to tRNA(Glu) in a two-step reaction: glutamate is first activated by ATP to form Glu-AMP and then transferred to the acceptor end of tRNA(Glu). This Helicobacter pylori (strain HPAG1) protein is Glutamate--tRNA ligase 2.